A 561-amino-acid chain; its full sequence is uncharacterized protein (561 aa).

The signal sequence occupies residues 1–24 (MELGAWRSILYIAFLFAITRHAFC). Topologically, residues 25–509 (KAVNLVHSPE…GYVYLSEIKQ (485 aa)) are lumenal. Residues 510-530 (YSSLILISLWISLILFVSFLN) form a helical membrane-spanning segment. At 531–561 (RRLILHYSFESVHQLKTLTRKFIYSSLLKQD) the chain is on the cytoplasmic side.

The protein localises to the endoplasmic reticulum membrane. Its subcellular location is the golgi apparatus membrane. This is an uncharacterized protein from Schizosaccharomyces pombe (strain 972 / ATCC 24843) (Fission yeast).